Here is a 326-residue protein sequence, read N- to C-terminus: Intracellular serine protease (326 aa).

The 281-residue stretch at 23–303 (PRGVEMIQAP…NGLLYLTAVE (281 aa)) folds into the Peptidase S8 domain. Active-site charge relay system residues include D49, H86, and S244.

Belongs to the peptidase S8 family.

Its function is as follows. Involved in the generation of beta- and alpha-amylases from the large amylase precursor. In Paenibacillus polymyxa (Bacillus polymyxa), this protein is Intracellular serine protease (isp).